The primary structure comprises 244 residues: Salivary gland SP38-40.A protein (244 aa).

Positions 1 to 21 are cleaved as a signal peptide; the sequence is MRIKFLVVLAVICLFAHYASA. 3 disordered regions span residues 23 to 91, 137 to 169, and 206 to 244; these read GMGG…EKKQ, PPPGAKKDDKKEKKTVKVVKPPKEKPPKKLRKE, and VQGKQKKGAKKAKGGKKAAPKPGPKPGPKQADKPKDAKK. Composition is skewed to basic and acidic residues over residues 26–86 and 157–169; these read GDKK…EVKK and PPKEKPPKKLRKE. A run of 2 repeats spans residues 29–34 and 35–40. The tract at residues 29–47 is 3 X 6 AA approximate tandem repeats of K-P-K-D-A-P; it reads KPKDAPKPKDAPKPKEVKP. A 1-3; approximate repeat occupies 41 to 47; the sequence is KPKEVKP. A run of 2 repeats spans residues 156–159 and 161–164. Positions 156-168 are 3 X 4 AA approximate tandem repeats of K-P-P-K; it reads KPPKEKPPKKLRK. The stretch at 165–168 is one 2-3; approximate repeat; sequence KLRK. Basic residues predominate over residues 209 to 224; the sequence is KQKKGAKKAKGGKKAA. 3 consecutive repeat copies span residues 225 to 228, 229 to 232, and 233 to 236. Positions 225–240 are 4 X 4 AA approximate tandem repeats of P-K-[PQ]-[GA]; that stretch reads PKPGPKPGPKQADKPK. The segment covering 235-244 has biased composition (basic and acidic residues); that stretch reads QADKPKDAKK. One copy of the 3-4; approximate repeat lies at 237–240; it reads DKPK.

As to expression, salivary gland.

It localises to the secreted. In terms of biological role, used by the larvae to construct a supramolecular structure, the larval tube. This Chironomus tentans (Midge) protein is Salivary gland SP38-40.A protein (SP38-40.A).